Here is a 184-residue protein sequence, read N- to C-terminus: ATP-dependent protease subunit HslV (184 aa).

The active site involves Thr-12. Na(+)-binding residues include Ala-166, Cys-169, and Thr-172.

Belongs to the peptidase T1B family. HslV subfamily. In terms of assembly, a double ring-shaped homohexamer of HslV is capped on each side by a ring-shaped HslU homohexamer. The assembly of the HslU/HslV complex is dependent on binding of ATP.

It is found in the cytoplasm. The catalysed reaction is ATP-dependent cleavage of peptide bonds with broad specificity.. Allosterically activated by HslU binding. In terms of biological role, protease subunit of a proteasome-like degradation complex believed to be a general protein degrading machinery. The protein is ATP-dependent protease subunit HslV of Brucella canis (strain ATCC 23365 / NCTC 10854 / RM-666).